The sequence spans 248 residues: Phosphomannomutase (248 aa).

Asp14 (nucleophile) is an active-site residue. Mg(2+)-binding residues include Asp14 and Asp16. The active-site Proton donor/acceptor is Asp16. Alpha-D-mannose 1-phosphate-binding residues include Arg23, Arg125, Arg136, Arg143, Ser181, and Asp183. Positions 209, 221, and 226 each coordinate Mg(2+).

Belongs to the eukaryotic PMM family. In terms of assembly, homodimer. Requires Mg(2+) as cofactor.

The protein localises to the cytoplasm. It carries out the reaction alpha-D-mannose 1-phosphate = D-mannose 6-phosphate. Its pathway is nucleotide-sugar biosynthesis; GDP-alpha-D-mannose biosynthesis; alpha-D-mannose 1-phosphate from D-fructose 6-phosphate: step 2/2. Its function is as follows. Catalyzes the interconversion of mannose-6-phosphate to mannose-1-phosphate, the precursor for the synthesis of GDP-mannose. GDP-mannose is an essential sugar nucleotide for the synthesis of D-mannose-containing cell wall polysaccharides (galactomannans and glucomannans), glycolipids, glycoproteins and the antioxidant L-ascorbate. The protein is Phosphomannomutase of Oryza sativa subsp. indica (Rice).